A 203-amino-acid polypeptide reads, in one-letter code: Large ribosomal subunit protein bL25 (203 aa).

This sequence belongs to the bacterial ribosomal protein bL25 family. CTC subfamily. Part of the 50S ribosomal subunit; part of the 5S rRNA/L5/L18/L25 subcomplex. Contacts the 5S rRNA. Binds to the 5S rRNA independently of L5 and L18.

This is one of the proteins that binds to the 5S RNA in the ribosome where it forms part of the central protuberance. The polypeptide is Large ribosomal subunit protein bL25 (Rickettsia conorii (strain ATCC VR-613 / Malish 7)).